The sequence spans 140 residues: ATP synthase epsilon chain (140 aa).

It belongs to the ATPase epsilon chain family. In terms of assembly, F-type ATPases have 2 components, CF(1) - the catalytic core - and CF(0) - the membrane proton channel. CF(1) has five subunits: alpha(3), beta(3), gamma(1), delta(1), epsilon(1). CF(0) has three main subunits: a, b and c.

The protein localises to the cell inner membrane. In terms of biological role, produces ATP from ADP in the presence of a proton gradient across the membrane. This chain is ATP synthase epsilon chain, found in Nitrosomonas eutropha (strain DSM 101675 / C91 / Nm57).